A 370-amino-acid polypeptide reads, in one-letter code: 4-hydroxy-3-methylbut-2-en-1-yl diphosphate synthase (flavodoxin) (370 aa).

Residues Cys-268, Cys-271, Cys-303, and Glu-310 each coordinate [4Fe-4S] cluster.

Belongs to the IspG family. The cofactor is [4Fe-4S] cluster.

The enzyme catalyses (2E)-4-hydroxy-3-methylbut-2-enyl diphosphate + oxidized [flavodoxin] + H2O + 2 H(+) = 2-C-methyl-D-erythritol 2,4-cyclic diphosphate + reduced [flavodoxin]. It functions in the pathway isoprenoid biosynthesis; isopentenyl diphosphate biosynthesis via DXP pathway; isopentenyl diphosphate from 1-deoxy-D-xylulose 5-phosphate: step 5/6. Its function is as follows. Converts 2C-methyl-D-erythritol 2,4-cyclodiphosphate (ME-2,4cPP) into 1-hydroxy-2-methyl-2-(E)-butenyl 4-diphosphate. This chain is 4-hydroxy-3-methylbut-2-en-1-yl diphosphate synthase (flavodoxin), found in Bacillus anthracis (strain A0248).